Consider the following 100-residue polypeptide: SAGA-associated factor 11 (100 aa).

An SGF11-type zinc finger spans residues 73–94 (FQCENCGRSIAGGRFAQHMTKC).

It belongs to the SGF11 family. In terms of assembly, component of the 1.8 MDa SAGA transcription coactivator-HAT complex. SAGA is built of 5 distinct domains with specialized functions. Within the SAGA complex, SUS1, SGF11, SGF73 and UBP8 form an additional subcomplex of SAGA called the DUB module (deubiquitination module). Interacts directly with SGF73, SUS1 and UBP8.

The protein localises to the nucleus. Functionally, functions as a component of the transcription regulatory histone acetylation (HAT) complex SAGA. At the promoters, SAGA is required for recruitment of the basal transcription machinery. It influences RNA polymerase II transcriptional activity through different activities such as TBP interaction and promoter selectivity, interaction with transcription activators, and chromatin modification through histone acetylation and deubiquitination. SAGA acetylates nucleosomal histone H3 to some extent (to form H3K9ac, H3K14ac, H3K18ac and H3K23ac). SAGA interacts with DNA via upstream activating sequences (UASs). Involved in transcriptional regulation of a subset of SAGA-regulated genes. Within the SAGA complex, participates in a subcomplex, that specifically deubiquitinates histones H2B. This is SAGA-associated factor 11 from Debaryomyces hansenii (strain ATCC 36239 / CBS 767 / BCRC 21394 / JCM 1990 / NBRC 0083 / IGC 2968) (Yeast).